The chain runs to 259 residues: MFFVLSPAKNLNEKDPAPVSEFTQPDLLAESDILMQQLRELAPQQIAELMHVSDKIALLNAQRNAEWNTPFTPENAKQAVFMFNGDVYEGMDANTLDIGQIRYLQNHVRLLSGLYGLLRPLDLIQPYRLEMGTAFANLRGKNLYEFWGDIITNLLNDTLAQAGSNTLVNLASQEYFKSVNTKKLRARLITPIFKDEKNGKYKIISFYAKRTRGLMVRYAAEHNITDPEMLKNFNYEGYVFNDAASNESEWVFMRSEQIK.

Belongs to the UPF0246 family.

The polypeptide is UPF0246 protein NMCC_0856 (Neisseria meningitidis serogroup C (strain 053442)).